Reading from the N-terminus, the 423-residue chain is Glucose-6-phosphate isomerase (423 aa).

Residue Glu-279 is the Proton donor of the active site. Residues His-300 and Lys-413 contribute to the active site.

The protein belongs to the GPI family.

It localises to the cytoplasm. The enzyme catalyses alpha-D-glucose 6-phosphate = beta-D-fructose 6-phosphate. It participates in carbohydrate biosynthesis; gluconeogenesis. The protein operates within carbohydrate degradation; glycolysis; D-glyceraldehyde 3-phosphate and glycerone phosphate from D-glucose: step 2/4. Functionally, catalyzes the reversible isomerization of glucose-6-phosphate to fructose-6-phosphate. The polypeptide is Glucose-6-phosphate isomerase (Acholeplasma laidlawii (strain PG-8A)).